We begin with the raw amino-acid sequence, 93 residues long: Small ribosomal subunit protein bS18 (93 aa).

Residues 1-11 (MAPSARNRKPG) are compositionally biased toward basic residues. A disordered region spans residues 1 to 27 (MAPSARNRKPGARSMAKAAALRKPKKK).

Belongs to the bacterial ribosomal protein bS18 family. In terms of assembly, part of the 30S ribosomal subunit. Forms a tight heterodimer with protein bS6.

Functionally, binds as a heterodimer with protein bS6 to the central domain of the 16S rRNA, where it helps stabilize the platform of the 30S subunit. The chain is Small ribosomal subunit protein bS18 from Salinispora tropica (strain ATCC BAA-916 / DSM 44818 / JCM 13857 / NBRC 105044 / CNB-440).